The chain runs to 787 residues: Transcriptional corepressor LEUNIG_HOMOLOG (787 aa).

A required for SEU-binding region spans residues 1-88 (MAQSNWEADK…IEAQQGKAKE (88 aa)). One can recognise a LisH domain in the interval 8-40 (ADKMLDVYIYDYLVKKKLHNTAKSFMTEGKVSP). Positions 77-106 (AYIEAQQGKAKEQQMQIQQLQMMRQAQMQR) form a coiled coil. The disordered stretch occupies residues 299–413 (NMTNSPMYGG…TPSTHTPVDG (115 aa)). 2 stretches are compositionally biased toward low complexity: residues 336–346 (SIGSPMQSSSS) and 355–372 (QQSS…QSQQ). The segment covering 380 to 409 (PSSSGPANSTGTGNTVGPSNSQPSTPSTHT) has biased composition (polar residues). 7 WD repeats span residues 508–547 (KSAS…VEST), 550–589 (EHAH…YFLR), 593–633 (GHAA…VRAV), 635–671 (GAST…KRVN), 675–715 (GHSS…HELS), 717–755 (SGNK…CMTV), and 757–787 (GHEC…KIWK).

Forms corepressor complexes with SLK1 and SLK2; LUH is the transcription repressor subunit and SLK1 and SLK2 the specific DNA-binding adapters. Interacts with SEU. Binds to YAB3, YAB5 and YAB1/FIL; these complexes promote adaxial cell identity in leaves as well as embryonic shoot apical meristem (SAM) initiation and postembryonic SAM maintenance. As to expression, expressed in roots, stems, leaves, seedlings, apex, flowers, siliques, flower organs and seeds (including seed coat).

It localises to the nucleus. In terms of biological role, transcription repressor subunit of the SEU-SLK1 and SEU-SLK2 transcriptional corepressor of abiotic stress (e.g. salt and osmotic stress) response genes, by means of an epigenetic process involving histone modification (e.g. H3K9 and H3K14 acetylation), probably by recruiting HDAC, to facilitate the condensation of chromatin thus preventing transcription at the target genes. Can also act as a transcription activator. Implicated in embryo and floral development. Involved in post-synthesis cell wall modifications necessary for mucilage extrusion from seeds upon imbibition, probably by promoting the expression of genes required for mucilage maturation (e.g. MUM2). Regulates the maintenance on leaf polarity and meristem activity as well as the initiation of embryonic shoot apical meristem (SAM) development. The sequence is that of Transcriptional corepressor LEUNIG_HOMOLOG from Arabidopsis thaliana (Mouse-ear cress).